Reading from the N-terminus, the 421-residue chain is Acyl-coenzyme A thioesterase 5 (421 aa).

Active-site charge relay system residues include S232, D326, and H360. The Microbody targeting signal signature appears at 419–421 (AKL).

Belongs to the C/M/P thioester hydrolase family. Highly expressed in spleen, brain, testis and proximal and distal intestine; expressed at low level in the liver.

It is found in the peroxisome. The catalysed reaction is hexadecanoyl-CoA + H2O = hexadecanoate + CoA + H(+). It catalyses the reaction decanoyl-CoA + H2O = decanoate + CoA + H(+). The enzyme catalyses octanoyl-CoA + H2O = octanoate + CoA + H(+). It carries out the reaction dodecanoyl-CoA + H2O = dodecanoate + CoA + H(+). The catalysed reaction is tetradecanoyl-CoA + H2O = tetradecanoate + CoA + H(+). It catalyses the reaction octadecanoyl-CoA + H2O = octadecanoate + CoA + H(+). The enzyme catalyses eicosanoyl-CoA + H2O = eicosanoate + CoA + H(+). It carries out the reaction (9Z)-octadecenoyl-CoA + H2O = (9Z)-octadecenoate + CoA + H(+). The catalysed reaction is (9Z,12Z)-octadecadienoyl-CoA + H2O = (9Z,12Z)-octadecadienoate + CoA + H(+). It catalyses the reaction (5Z,8Z,11Z,14Z)-eicosatetraenoyl-CoA + H2O = (5Z,8Z,11Z,14Z)-eicosatetraenoate + CoA + H(+). The enzyme catalyses (9Z)-hexadecenoyl-CoA + H2O = (9Z)-hexadecenoate + CoA + H(+). It functions in the pathway lipid metabolism; fatty acid metabolism. Functionally, catalyzes the hydrolysis of acyl-CoAs into free fatty acids and coenzyme A (CoASH), regulating their respective intracellular levels. Mainly active on medium-chain acyl-CoAs. Seems to be involved in intraperoxisomal regulation of acyl-CoA levels, but not CoASH levels. May have a function in termination of beta-oxidation of fatty acids. This is Acyl-coenzyme A thioesterase 5 (Acot5) from Mus musculus (Mouse).